Consider the following 538-residue polypeptide: (R)-citramalate synthase (538 aa).

The 266-residue stretch at 3–268 folds into the Pyruvate carboxyltransferase domain; it reads IKVYDTTLRD…IPKENLKKLF (266 aa).

This sequence belongs to the alpha-IPM synthase/homocitrate synthase family.

It carries out the reaction pyruvate + acetyl-CoA + H2O = (3R)-citramalate + CoA + H(+). It functions in the pathway amino-acid biosynthesis; L-isoleucine biosynthesis; 2-oxobutanoate from pyruvate: step 1/3. In terms of biological role, catalyzes the condensation of pyruvate and acetyl-coenzyme A to form (R)-citramalate. The polypeptide is (R)-citramalate synthase (Thermotoga maritima (strain ATCC 43589 / DSM 3109 / JCM 10099 / NBRC 100826 / MSB8)).